Reading from the N-terminus, the 139-residue chain is Acid shock protein (139 aa).

The signal sequence occupies residues Met1–Ala21. The propeptide occupies Ala22–Gln80. A compositionally biased stretch (low complexity) spans Thr27 to Lys40. Residues Thr27–Ala139 are disordered. Residues Thr41 to Ala51 show a composition bias toward basic residues. Composition is skewed to low complexity over residues Ala52–Gln61 and Ala90–Gln99. A compositionally biased stretch (basic residues) spans Ala118 to Ala130.

The protein belongs to the Asr family. Proteolytic processing gives rise to the active protein.

The protein resides in the periplasm. Its function is as follows. Required for growth and/or survival at acidic conditions. The sequence is that of Acid shock protein (asr) from Klebsiella pneumoniae.